A 251-amino-acid polypeptide reads, in one-letter code: 2,3-bisphosphoglycerate-dependent phosphoglycerate mutase (251 aa).

Residues 13–20, 26–27, arginine 65, 92–95, lysine 103, 119–120, and 186–187 each bind substrate; these read RHGESEWN, TG, ERHY, RR, and GN. Histidine 14 functions as the Tele-phosphohistidine intermediate in the catalytic mechanism. Glutamate 92 serves as the catalytic Proton donor/acceptor.

It belongs to the phosphoglycerate mutase family. BPG-dependent PGAM subfamily.

The catalysed reaction is (2R)-2-phosphoglycerate = (2R)-3-phosphoglycerate. Its pathway is carbohydrate degradation; glycolysis; pyruvate from D-glyceraldehyde 3-phosphate: step 3/5. In terms of biological role, catalyzes the interconversion of 2-phosphoglycerate and 3-phosphoglycerate. The sequence is that of 2,3-bisphosphoglycerate-dependent phosphoglycerate mutase from Rhodococcus jostii (strain RHA1).